The following is a 464-amino-acid chain: Probable glycosyltransferase Saci_1499 (464 aa).

A run of 6 helical transmembrane segments spans residues 6–26 (IFLN…QIIL), 300–320 (LIIY…STLL), 337–357 (ALLF…SLAL), 373–393 (LTAF…KGLL), 416–436 (IIAI…LYIY), and 439–459 (YYVT…TMLL).

The protein belongs to the glycosyltransferase 2 family.

The protein localises to the cell membrane. Functionally, probably part of a 4-gene DNA damage response locus in which the upstream ups system, in combination with this downstream locus, functions in homologous recombination to rescue Sulfolobales from DNA-damaging threats. The chain is Probable glycosyltransferase Saci_1499 from Sulfolobus acidocaldarius (strain ATCC 33909 / DSM 639 / JCM 8929 / NBRC 15157 / NCIMB 11770).